The following is a 309-amino-acid chain: Taste receptor type 2 member 46 (309 aa).

Residue methionine 1 is a topological domain, extracellular. A helical membrane pass occupies residues 2–22; the sequence is ITFLPIIFSILIVVTFVIGNF. Residues 23–46 lie on the Cytoplasmic side of the membrane; sequence ANGFIALANSIEWFKRQKISFADQ. Residues 47-67 form a helical membrane-spanning segment; that stretch reads ILTALAVSRVGLLWVLLLNWY. Topologically, residues 68-86 are extracellular; it reads ATELNPAFYSIEVRITAYN. A helical membrane pass occupies residues 87-107; sequence VWAVISHFSNWLATSLSIFYL. The Cytoplasmic portion of the chain corresponds to 108-126; it reads LKIANFSNLIFLRLKRRVK. Residues 127–147 traverse the membrane as a helical segment; that stretch reads SVVLVILLGPLLFLVCHLFVI. Topologically, residues 148-178 are extracellular; that stretch reads NMNQIIWTKEYEGNMTWKIKLRSAMYLSDTT. Residue asparagine 161 is glycosylated (N-linked (GlcNAc...) asparagine). The chain crosses the membrane as a helical span at residues 179 to 199; sequence VTILANLVPFTLTLISFLLLI. At 200 to 229 the chain is on the cytoplasmic side; that stretch reads CSLCKHLKKMQLHGKGSQDPSMKVHIKALQ. Residues 230–250 traverse the membrane as a helical segment; sequence TVTSFLLLCAIYFLSVIMSVW. Over 251 to 259 the chain is Extracellular; it reads SFESLENKP. A helical membrane pass occupies residues 260–280; that stretch reads VFMFCEAITFSYPSTHPFILI. Over 281–309 the chain is Cytoplasmic; the sequence is WGNKKLKQTFLSVLWHVRYWVKGEKPSSS.

Belongs to the G-protein coupled receptor T2R family.

It is found in the membrane. Its subcellular location is the cell projection. The protein localises to the cilium membrane. Functionally, receptor that may play a role in the perception of bitterness and is gustducin-linked. May play a role in sensing the chemical composition of the gastrointestinal content. The activity of this receptor may stimulate alpha gustducin, mediate PLC-beta-2 activation and lead to the gating of TRPM5. In airway epithelial cells, binding of bitter compounds increases the intracellular calcium ion concentration and stimulates ciliary beat frequency. This chain is Taste receptor type 2 member 46 (TAS2R46), found in Gorilla gorilla gorilla (Western lowland gorilla).